Here is a 142-residue protein sequence, read N- to C-terminus: Protein CPn_0742/CP_0003/CPj0742/CpB0770 (142 aa).

The disordered stretch occupies residues 115 to 142 (LHPTKESKRPKQKLSSTKKNKKKNWIPL). Residues 124-142 (PKQKLSSTKKNKKKNWIPL) are compositionally biased toward basic residues.

The protein belongs to the chlamydial CPn_0742/CT_635/TC_0003 family.

The protein is Protein CPn_0742/CP_0003/CPj0742/CpB0770 of Chlamydia pneumoniae (Chlamydophila pneumoniae).